We begin with the raw amino-acid sequence, 144 residues long: Large ribosomal subunit protein uL16 (144 aa).

The protein belongs to the universal ribosomal protein uL16 family. Part of the 50S ribosomal subunit.

In terms of biological role, binds 23S rRNA and is also seen to make contacts with the A and possibly P site tRNAs. The polypeptide is Large ribosomal subunit protein uL16 (Levilactobacillus brevis (strain ATCC 367 / BCRC 12310 / CIP 105137 / JCM 1170 / LMG 11437 / NCIMB 947 / NCTC 947) (Lactobacillus brevis)).